The chain runs to 107 residues: U1-lycotoxin-Ls1k (107 aa).

A signal peptide spans M1–S20. A propeptide spanning residues E21–R41 is cleaved from the precursor. Disulfide bonds link C44–C59, C51–C68, C58–C86, and C70–C84.

The protein belongs to the neurotoxin 19 (CSTX) family. 04 (U1-Lctx) subfamily. In terms of tissue distribution, expressed by the venom gland.

The protein resides in the secreted. In Lycosa singoriensis (Wolf spider), this protein is U1-lycotoxin-Ls1k.